The sequence spans 317 residues: Melanocyte-stimulating hormone receptor (317 aa).

The Extracellular segment spans residues 1 to 37 (MPMQEPQRRLLGPFNSTRTGAPHLELSANQTGPWCLH). N-linked (GlcNAc...) asparagine glycans are attached at residues Asn15 and Asn29. A helical membrane pass occupies residues 38 to 63 (VSIPDGLFLSLGLVSLVENVLVVISI). At 64–72 (AKNQNLHSP) the chain is on the cytoplasmic side. Residues 73-93 (MYYFICCLALSDLLVSVSIVL) traverse the membrane as a helical segment. Residues 94 to 118 (ETTLILVLEAGALATRVTVVQQLDN) lie on the Extracellular side of the membrane. A helical transmembrane segment spans residues 119 to 140 (VIDVLICASMVSSLCFLGAIAV). The Cytoplasmic segment spans residues 141 to 163 (DRYISIFYALRYHSIVTLPRARW). The chain crosses the membrane as a helical span at residues 164 to 183 (AIVAIWVASISSSTLFVAYY). At 184 to 191 (NHTAVLLC) the chain is on the extracellular side. A helical membrane pass occupies residues 192-211 (LVTFFLATLALMVVLYVHML). Over 212-240 (ARAHQHAQAIAQLHKRQHLVHQGFRLKGA) the chain is Cytoplasmic. A helical membrane pass occupies residues 241–266 (ATLTILLGIFFLCWGPFFLYLTLIVL). The Extracellular segment spans residues 267–279 (CPKHPTCGCFFKN). Residues 280 to 300 (LNLFLALIIFNSIVDPLIYAF) traverse the membrane as a helical segment. Over 301–317 (RSQELRMTLKEVLLCSW) the chain is Cytoplasmic. Cys315 carries the S-palmitoyl cysteine lipid modification.

It belongs to the G-protein coupled receptor 1 family. In terms of assembly, interacts with MGRN1, but does not undergo MGRN1-mediated ubiquitination; this interaction competes with GNAS-binding and thus inhibits agonist-induced cAMP production. Interacts with OPN3; the interaction results in a decrease in MC1R-mediated cAMP signaling and ultimately a decrease in melanin production in melanocytes.

Its subcellular location is the cell membrane. Receptor for MSH (alpha, beta and gamma) and ACTH. The activity of this receptor is mediated by G proteins which activate adenylate cyclase. Mediates melanogenesis, the production of eumelanin (black/brown) and phaeomelanin (red/yellow), via regulation of cAMP signaling in melanocytes. The polypeptide is Melanocyte-stimulating hormone receptor (MC1R) (Chaetodipus penicillatus (Desert pocket mouse)).